A 217-amino-acid polypeptide reads, in one-letter code: Phosphatidylserine decarboxylase proenzyme (217 aa).

The active-site Schiff-base intermediate with substrate; via pyruvic acid is the S183. The residue at position 183 (S183) is a Pyruvic acid (Ser); by autocatalysis.

It belongs to the phosphatidylserine decarboxylase family. PSD-A subfamily. In terms of assembly, heterodimer of a large membrane-associated beta subunit and a small pyruvoyl-containing alpha subunit. Requires pyruvate as cofactor. Is synthesized initially as an inactive proenzyme. Formation of the active enzyme involves a self-maturation process in which the active site pyruvoyl group is generated from an internal serine residue via an autocatalytic post-translational modification. Two non-identical subunits are generated from the proenzyme in this reaction, and the pyruvate is formed at the N-terminus of the alpha chain, which is derived from the carboxyl end of the proenzyme. The post-translation cleavage follows an unusual pathway, termed non-hydrolytic serinolysis, in which the side chain hydroxyl group of the serine supplies its oxygen atom to form the C-terminus of the beta chain, while the remainder of the serine residue undergoes an oxidative deamination to produce ammonia and the pyruvoyl prosthetic group on the alpha chain.

The protein resides in the cell membrane. It carries out the reaction a 1,2-diacyl-sn-glycero-3-phospho-L-serine + H(+) = a 1,2-diacyl-sn-glycero-3-phosphoethanolamine + CO2. It functions in the pathway phospholipid metabolism; phosphatidylethanolamine biosynthesis; phosphatidylethanolamine from CDP-diacylglycerol: step 2/2. Functionally, catalyzes the formation of phosphatidylethanolamine (PtdEtn) from phosphatidylserine (PtdSer). The polypeptide is Phosphatidylserine decarboxylase proenzyme (Cupriavidus metallidurans (strain ATCC 43123 / DSM 2839 / NBRC 102507 / CH34) (Ralstonia metallidurans)).